A 165-amino-acid chain; its full sequence is MFVSTYEGAIDAKGRVSIPAPFRAALGGSSRVFVWQAPDGSGALEGGGEELMELYRETLAELPLQSPIREAIVTCIIAASAELKIDDTGRVKLPEDLCEAGELSGKIKFSGQMDSFRIWNPERFSLHQMRMRSIVTAPETLDAFASAYNRVRQRRMAAGRGGEGS.

2 consecutive SpoVT-AbrB domains span residues 5–51 (TYEG…GEEL) and 80–123 (SAEL…NPER).

It belongs to the MraZ family. As to quaternary structure, forms oligomers.

The protein localises to the cytoplasm. It localises to the nucleoid. The protein is Transcriptional regulator MraZ of Hyphomonas neptunium (strain ATCC 15444).